The following is a 74-amino-acid chain: Translation initiation factor IF-1 (74 aa).

An S1-like domain is found at 1–72 (MADTEKLKML…TRGRITYRHR (72 aa)).

Belongs to the IF-1 family. Component of the 30S ribosomal translation pre-initiation complex which assembles on the 30S ribosome in the order IF-2 and IF-3, IF-1 and N-formylmethionyl-tRNA(fMet); mRNA recruitment can occur at any time during PIC assembly.

Its subcellular location is the cytoplasm. One of the essential components for the initiation of protein synthesis. Stabilizes the binding of IF-2 and IF-3 on the 30S subunit to which N-formylmethionyl-tRNA(fMet) subsequently binds. Helps modulate mRNA selection, yielding the 30S pre-initiation complex (PIC). Upon addition of the 50S ribosomal subunit IF-1, IF-2 and IF-3 are released leaving the mature 70S translation initiation complex. The chain is Translation initiation factor IF-1 from Ureaplasma parvum serovar 3 (strain ATCC 700970).